Reading from the N-terminus, the 320-residue chain is Foldase protein PrsA (320 aa).

The N-terminal stretch at 1-20 (MKMINKLIVPVTASALLLGA) is a signal peptide. Cys21 carries N-palmitoyl cysteine lipidation. The S-diacylglycerol cysteine moiety is linked to residue Cys21. In terms of domain architecture, PpiC spans 139 to 245 (EDSKKASHIL…FGYHIIKADK (107 aa)). The segment at 159–198 (EGLDDKEAKQKAEEIQKEVSKDPSKFGEIAKKESMDTGSA) is disordered.

It belongs to the PrsA family.

It is found in the cell membrane. The enzyme catalyses [protein]-peptidylproline (omega=180) = [protein]-peptidylproline (omega=0). Plays a major role in protein secretion by helping the post-translocational extracellular folding of several secreted proteins. The protein is Foldase protein PrsA of Staphylococcus aureus (strain bovine RF122 / ET3-1).